Reading from the N-terminus, the 144-residue chain is MNRTILVPIDISDSELTQRVISHVEEEAKIDDAEVHFLTVIPSLPYYASLGLAYSAELPAMDDLKAEAKSQLEEIIKKFKLPTDRVHVHVEEGSPKDRILELAKKIPAHMIIIASHRPDITTYLLGSNAAAVVRHAECSVLVVR.

This sequence belongs to the universal stress protein A family. Homodimer.

The polypeptide is Universal stress protein F (uspF) (Escherichia coli (strain K12)).